The primary structure comprises 259 residues: Proteasome subunit alpha type-7 (259 aa).

This sequence belongs to the peptidase T1A family. The 26S proteasome consists of a 20S proteasome core and two 19S regulatory subunits. The 20S proteasome core is composed of 28 subunits that are arranged in four stacked rings, resulting in a barrel-shaped structure. The two end rings are each formed by seven alpha subunits, and the two central rings are each formed by seven beta subunits. The catalytic chamber with the active sites is on the inside of the barrel.

It is found in the cytoplasm. Its subcellular location is the nucleus. The proteasome is a multicatalytic proteinase complex which is characterized by its ability to cleave peptides with Arg, Phe, Tyr, Leu, and Glu adjacent to the leaving group at neutral or slightly basic pH. The proteasome has an ATP-dependent proteolytic activity. The protein is Proteasome subunit alpha type-7 (PAD1) of Solanum lycopersicum (Tomato).